Reading from the N-terminus, the 312-residue chain is tRNA-dihydrouridine(16) synthase (312 aa).

Residues P7–E9 and Q68 contribute to the FMN site. C98 serves as the catalytic Proton donor. FMN-binding positions include K139, N200–E202, and G224–R225.

It belongs to the Dus family. DusC subfamily. FMN is required as a cofactor.

The enzyme catalyses 5,6-dihydrouridine(16) in tRNA + NADP(+) = uridine(16) in tRNA + NADPH + H(+). The catalysed reaction is 5,6-dihydrouridine(16) in tRNA + NAD(+) = uridine(16) in tRNA + NADH + H(+). Functionally, catalyzes the synthesis of 5,6-dihydrouridine (D), a modified base found in the D-loop of most tRNAs, via the reduction of the C5-C6 double bond in target uridines. Specifically modifies U16 in tRNAs. The sequence is that of tRNA-dihydrouridine(16) synthase from Salmonella typhimurium (strain LT2 / SGSC1412 / ATCC 700720).